Consider the following 449-residue polypeptide: Glutamyl-tRNA reductase (449 aa).

Substrate contacts are provided by residues 58 to 61 (TCNR), S121, 126 to 128 (ETQ), and Q132. C59 (nucleophile) is an active-site residue. NADP(+) is bound at residue 203 to 208 (GLGEMA).

This sequence belongs to the glutamyl-tRNA reductase family. Homodimer.

The enzyme catalyses (S)-4-amino-5-oxopentanoate + tRNA(Glu) + NADP(+) = L-glutamyl-tRNA(Glu) + NADPH + H(+). Its pathway is porphyrin-containing compound metabolism; protoporphyrin-IX biosynthesis; 5-aminolevulinate from L-glutamyl-tRNA(Glu): step 1/2. Its function is as follows. Catalyzes the NADPH-dependent reduction of glutamyl-tRNA(Glu) to glutamate 1-semialdehyde (GSA). This is Glutamyl-tRNA reductase from Helicobacter pylori (strain ATCC 700392 / 26695) (Campylobacter pylori).